A 373-amino-acid polypeptide reads, in one-letter code: Histone-lysine N-methyltransferase SETD7 (373 aa).

A disordered region spans residues 1–20; that stretch reads MDSDDDNMEEVVEGPLDEDD. MORN repeat units lie at residues 36 to 58, 59 to 81, and 106 to 128; these read FEGH…DGST, LEGF…DGGA, and FRGR…DGAC. Residues 214 to 336 enclose the SET domain; it reads QRVYVGQSLI…KDEELTVAYG (123 aa). Residues 226 to 228, Asn-296, and His-297 each bind S-adenosyl-L-methionine; that span reads AGE.

This sequence belongs to the class V-like SAM-binding methyltransferase superfamily. Histone-lysine methyltransferase family. SET7 subfamily.

It localises to the nucleus. The protein localises to the chromosome. It catalyses the reaction L-lysyl(4)-[histone H3] + S-adenosyl-L-methionine = N(6)-methyl-L-lysyl(4)-[histone H3] + S-adenosyl-L-homocysteine + H(+). The catalysed reaction is L-lysyl-[protein] + S-adenosyl-L-methionine = N(6)-methyl-L-lysyl-[protein] + S-adenosyl-L-homocysteine + H(+). Functionally, histone methyltransferase that specifically monomethylates 'Lys-4' of histone H3. H3 'Lys-4' methylation represents a specific tag for epigenetic transcriptional activation. Plays a central role in the transcriptional activation of genes. Also has methyltransferase activity toward non-histone proteins. This chain is Histone-lysine N-methyltransferase SETD7 (setd7), found in Danio rerio (Zebrafish).